Reading from the N-terminus, the 434-residue chain is Gamma-enolase (434 aa).

His158 and Glu167 together coordinate substrate. Glu210 acts as the Proton donor in catalysis. 3 residues coordinate Mg(2+): Asp245, Glu293, and Asp318. 2 residues coordinate substrate: Glu293 and Asp318. The active-site Proton acceptor is the Lys343. Residues 370-373 (SHRS) and Lys394 each bind substrate.

It belongs to the enolase family. Homodimer. Mg(2+) serves as cofactor. As to expression, expressed in the brain and, to much less but significant extents, in the pituitary and adrenal glands.

It localises to the cytoplasm. The catalysed reaction is (2R)-2-phosphoglycerate = phosphoenolpyruvate + H2O. It functions in the pathway carbohydrate degradation; glycolysis; pyruvate from D-glyceraldehyde 3-phosphate: step 4/5. The sequence is that of Gamma-enolase (ENO2) from Gallus gallus (Chicken).